The sequence spans 363 residues: G kinase-anchoring protein 1-B (363 aa).

Disordered stretches follow at residues A17 to A79 and V147 to K182. Residues K50–A79 are a coiled coil. Positions K160–N170 are enriched in basic residues. Coiled-coil stretches lie at residues D249–E298 and A328–Q348.

It belongs to the GKAP1 family.

Its subcellular location is the golgi apparatus. Functionally, may play a role in the regulation of insulin-dependent IRS1 tyrosine phosphorylation in adipocytes. The sequence is that of G kinase-anchoring protein 1-B (gkap1-b) from Xenopus laevis (African clawed frog).